Here is a 57-residue protein sequence, read N- to C-terminus: Protein YnaL (57 aa).

Positions 7–57 (LQIPVPEPIPGDPVPVPDPIPRPQPMPDPPPDEEPIKLSHRERRSARIRAC) are disordered. Pro residues predominate over residues 11 to 35 (VPEPIPGDPVPVPDPIPRPQPMPDP). A compositionally biased stretch (basic residues) spans 46 to 57 (HRERRSARIRAC).

The polypeptide is Protein YnaL (Escherichia coli (strain K12)).